The primary structure comprises 238 residues: Lipid transferase CIDEC (238 aa).

The interval 1–35 is required for liquid-liquid phase separation (LLPS); sequence MDYAMKSLSLLYPRSLSRHVAVSTAVVTQQLVSEP. The 78-residue stretch at 41-118 folds into the CIDE-N domain; it reads RARPCRVSTA…VLQKGQKWKS (78 aa).

The protein belongs to the CIDE family. Homodimer. Interacts with CIDEA. Homooligomer; undergoes liquid-liquid phase separation (LLPS) via its N-terminus, facilitating lipid droplet fusion, occurs at the lipid droplet contact sites. Interacts with PLIN1. Interacts with NFAT5; this interaction is direct and retains NFAT5 in the cytoplasm. Interacts with CEBPB. Interacts with isoform CLSTN3beta of CLSTN3; inhibiting the lipid transferase activity of CIDEC. In terms of processing, ubiquitinated and targeted to proteasomal degradation, resulting in a short half-life (about 15 minutes in 3T3-L1 cells). Protein stability depends on triaclyglycerol synthesis, fatty acid availability and lipid droplet formation.

It localises to the lipid droplet. The protein localises to the endoplasmic reticulum. It is found in the nucleus. It catalyses the reaction a triacyl-sn-glycerol(in) = a triacyl-sn-glycerol(out). Lipid transferase specifically expressed in white adipose tissue, which promotes unilocular lipid droplet formation by mediating lipid droplet fusion. Lipid droplet fusion promotes their enlargement, restricting lipolysis and favoring lipid storage. Localizes on the lipid droplet surface, at focal contact sites between lipid droplets, and mediates atypical lipid droplet fusion by undergoing liquid-liquid phase separation (LLPS) and promoting directional net neutral lipid transfer from the smaller to larger lipid droplets. The transfer direction may be driven by the internal pressure difference between the contacting lipid droplet pair. Its role in neutral lipid transfer and lipid droplet enlargement is activated by the interaction with PLIN1. May also act as a CEBPB coactivator in the white adipose tissue to control the expression of a subset of CEBPB downstream target genes, including SOCS1, SOCS3, TGFB1, TGFBR1, ID2 and XDH. When overexpressed in preadipocytes, induces apoptosis or increases cell susceptibility to apoptosis induced by serum deprivation or TGFB treatment. In Rattus norvegicus (Rat), this protein is Lipid transferase CIDEC.